The following is a 180-amino-acid chain: Large ribosomal subunit protein uL6 (180 aa).

The protein belongs to the universal ribosomal protein uL6 family. As to quaternary structure, part of the 50S ribosomal subunit.

Its function is as follows. This protein binds to the 23S rRNA, and is important in its secondary structure. It is located near the subunit interface in the base of the L7/L12 stalk, and near the tRNA binding site of the peptidyltransferase center. In Salinispora tropica (strain ATCC BAA-916 / DSM 44818 / JCM 13857 / NBRC 105044 / CNB-440), this protein is Large ribosomal subunit protein uL6.